The primary structure comprises 348 residues: Protein RecA (348 aa).

Position 64–71 (64–71 (GPESSGKT)) interacts with ATP. A compositionally biased stretch (basic and acidic residues) spans 325-335 (YEIDGANKEPL). A disordered region spans residues 325–348 (YEIDGANKEPLEETEETLSLLDDE). Positions 336–348 (EETEETLSLLDDE) are enriched in acidic residues.

It belongs to the RecA family.

The protein localises to the cytoplasm. Can catalyze the hydrolysis of ATP in the presence of single-stranded DNA, the ATP-dependent uptake of single-stranded DNA by duplex DNA, and the ATP-dependent hybridization of homologous single-stranded DNAs. It interacts with LexA causing its activation and leading to its autocatalytic cleavage. This chain is Protein RecA, found in Listeria welshimeri serovar 6b (strain ATCC 35897 / DSM 20650 / CCUG 15529 / CIP 8149 / NCTC 11857 / SLCC 5334 / V8).